Here is a 428-residue protein sequence, read N- to C-terminus: Enolase (428 aa).

Q162 is a (2R)-2-phosphoglycerate binding site. E204 serves as the catalytic Proton donor. 3 residues coordinate Mg(2+): D241, E283, and D310. 4 residues coordinate (2R)-2-phosphoglycerate: K335, R364, S365, and K386. K335 serves as the catalytic Proton acceptor.

This sequence belongs to the enolase family. The cofactor is Mg(2+).

The protein resides in the cytoplasm. It localises to the secreted. Its subcellular location is the cell surface. The enzyme catalyses (2R)-2-phosphoglycerate = phosphoenolpyruvate + H2O. It participates in carbohydrate degradation; glycolysis; pyruvate from D-glyceraldehyde 3-phosphate: step 4/5. Functionally, catalyzes the reversible conversion of 2-phosphoglycerate (2-PG) into phosphoenolpyruvate (PEP). It is essential for the degradation of carbohydrates via glycolysis. The polypeptide is Enolase (Rhodococcus jostii (strain RHA1)).